We begin with the raw amino-acid sequence, 364 residues long: MIIEELHIVNFKSIAAADCRFSPKVNCLVGNNGMGKTNLLDALHFLSFCRSHLSVPDNMVVRHGEEMALLQGLYRDESGDGIELLLSIRPGKHKVLRRNKKEYERLSDHIGHFPLVIVSPQDYQLILGGSDERRRFMDQQLCQQDPRYLSALIQYNRHLQQRNTMLKQDRHDDALMDVLELQMGSYAAEIYNKRSRFIEDFLPVFNDLYSDISGSAEKVSLSYRSHLADGIPLEELLRRSRPKDYLLGFSSCGVHKDELEMLLGGVLIRKIGSEGQNKTFLISMKLAQFRHQQLHGDETPILLLDDIFDKLDATRVERIIRLVGGNGFGQIFITDTNRKNLDEIIASWSEDYRLFEIENGQIFQ.

30 to 37 (GNNGMGKT) is an ATP binding site.

This sequence belongs to the RecF family.

It localises to the cytoplasm. Its function is as follows. The RecF protein is involved in DNA metabolism; it is required for DNA replication and normal SOS inducibility. RecF binds preferentially to single-stranded, linear DNA. It also seems to bind ATP. In Porphyromonas gingivalis (strain ATCC 33277 / DSM 20709 / CIP 103683 / JCM 12257 / NCTC 11834 / 2561), this protein is DNA replication and repair protein RecF.